The primary structure comprises 422 residues: Vitamin D3 receptor (422 aa).

The nuclear receptor DNA-binding region spans 22–90 (PRICGVCGDK…RLKRCVDIGM (69 aa)). Cys25, Cys28, Cys42, Cys45, Cys61, Cys67, Cys77, and Cys80 together coordinate Zn(2+). 2 consecutive NR C4-type zinc fingers follow at residues 25-45 (CGVCGDKATGFHFNAMTCEGC) and 61-85 (CPFNGDCRITKDNRRHCQSCRLKRC). The hinge stretch occupies residues 98–127 (DEEVQRKRQMINKRKSEEALKESMRPKISD). Residues 128-418 (EQQKMIDILL…LTPLMLEVFS (291 aa)) enclose the NR LBD domain. A disordered region spans residues 170 to 191 (RSSSVHTQGSPSEDSDVFTSSP). Calcitriol is bound at residue Ser232. The interval 241–259 (KMIPGFRDLIAEDQIALLK) is interaction with coactivator LXXLL motif. Arg269, Ser273, His300, and His392 together coordinate calcitriol. A 9aaTAD motif is present at residues 411 to 419 (PLMLEVFSD).

This sequence belongs to the nuclear hormone receptor family. NR1 subfamily. As to quaternary structure, homodimer in the absence of bound vitamin D3. Heterodimer with RXRA after vitamin D3 binding. In terms of tissue distribution, detected in all tissues examined. Highest level in small intestine and skin.

It is found in the nucleus. Its subcellular location is the cytoplasm. Its function is as follows. Nuclear receptor for calcitriol, the active form of vitamin D3 which mediates the action of this vitamin on cells. Enters the nucleus upon vitamin D3 binding where it forms heterodimers with the retinoid X receptor/RXR. The VDR-RXR heterodimers bind to specific response elements on DNA and activate the transcription of vitamin D3-responsive target genes. Plays a central role in calcium homeostasis. Also functions as a receptor for the secondary bile acid lithocholic acid (LCA) and its metabolites. This chain is Vitamin D3 receptor (vdr), found in Xenopus laevis (African clawed frog).